Here is a 264-residue protein sequence, read N- to C-terminus: MKVYGLIGKPVSHSLSPVMHNALFRKYGIDAVYVTFEVEELGKAIDGVRALGISGLNVTMPYKEVVTKFLDELSEDAREINSVNTIINLEGSLIGYTTDGVGARKALERFTEIEGRNVLILGAGGAGKAIAYELSKIANIVVLNRTPSKAKSLEKFGVKGGSLDELPNYVGWADVLINATSVGMGTNESLVPRRLLRRELIVMDIVYKPLKTRLLRDAESVGCRVIDGLWMLIYQGAESFKLWTGIYPDVELMRRVSLERLGKG.

Shikimate contacts are provided by residues 14-16 (SLS) and Thr-59. Catalysis depends on Lys-63, which acts as the Proton acceptor. Glu-75 contributes to the NADP(+) binding site. 2 residues coordinate shikimate: Asn-84 and Asp-99. Residues 122–126 (GAGGA), 144–149 (NRTPSK), and Ile-205 each bind NADP(+). Tyr-207 is a shikimate binding site. Gly-228 lines the NADP(+) pocket.

This sequence belongs to the shikimate dehydrogenase family. In terms of assembly, homodimer.

It catalyses the reaction shikimate + NADP(+) = 3-dehydroshikimate + NADPH + H(+). Its pathway is metabolic intermediate biosynthesis; chorismate biosynthesis; chorismate from D-erythrose 4-phosphate and phosphoenolpyruvate: step 4/7. Functionally, involved in the biosynthesis of the chorismate, which leads to the biosynthesis of aromatic amino acids. Catalyzes the reversible NADPH linked reduction of 3-dehydroshikimate (DHSA) to yield shikimate (SA). The chain is Shikimate dehydrogenase (NADP(+)) from Pyrococcus abyssi (strain GE5 / Orsay).